The sequence spans 563 residues: Cytochrome P450 monooxygenase phqL (563 aa).

Helical transmembrane passes span 20–40 (ENFSRLTTAFVAGIAAHIIIF), 52–72 (IPVGLFILQSCLFSYYLFVPG), and 80–100 (ALWLVGQITLGFIAGTTVSIL). The N-linked (GlcNAc...) asparagine glycan is linked to asparagine 279. Residues 362-382 (LVIFAGSGTVAVTIIGCLYFL) traverse the membrane as a helical segment. N-linked (GlcNAc...) asparagine glycosylation occurs at asparagine 419. Cysteine 502 contacts heme.

Belongs to the cytochrome P450 family. Heme serves as cofactor.

It is found in the membrane. It functions in the pathway alkaloid biosynthesis. Its function is as follows. Cytochrome P450 monooxygenase; part of the gene cluster that mediates the biosynthesis of paraherquamide, a fungal indole alkaloid that belongs to a family of natural products containing a characteristic bicyclo[2.2.2]diazaoctane core. The first steps in the biosynthesis of paraherquamide is the production of the beta-methyl-proline precursor from L-isoleucine. They require oxidation of a terminally hydroxylated L-isoleucine to the corresponding aldehyde by enzymes which have still to be identified. Spontaneous cyclization and dehydration would yield the 4-methyl pyrolline-5-carboxylic acid, which is then reduced by the pyrroline-5-carboxylate reductase phqD leading to the beta-methyl-proline precursor. The next step of paraherquamide biosynthesis involves coupling of beta-methyl-proline and L-tryptophan by the bimodular NRPS phqB, to produce a monooxopiperazine intermediate. The reductase (R) domain of phqB utilizes NADPH for hydride transfer to reduce the thioester bond of the T domain-tethered linear dipeptide to a hemithioaminal intermediate, which spontaneously cleaves the C-S bond to release the aldehyde product. This compound undergoes spontaneous cyclization and dehydration to give a dienamine which is reverse prenylated at C-2 by the reverse prenyltransferase phqJ. The other prenyltransferase present in the cluster, phqI may be a redundant gene in the pathway. During biosynthetic assembly, the key step to produce the polycyclic core is catalyzed by the bifunctional reductase and intramolecular [4+2] Diels-Alderase, phqE, resulting in formation of the [2.2.2] diazaoctane intermediate preparaherquamide. Following formation of preparaherquamide, an indole 2,3-epoxidation-initiated pinacol-like rearrangement is catalyzed by the phqK FAD-dependent monooxygenase. The prenyltransferase phqA, the cytochrome P450 monooxygenase phqL, and the FAD-linked oxidoreductase phqH (or the cytochrome P450 monooxygenase phqM), are proposed to be involved in the formation of the pyran ring. The FAD-dependent monooxygenase phqK is likely responsible for generation of the spiro-oxindole, and the N-methylation is likely mediated by the phqN methyltransferase leading to the isolable natural product paraherquamide F. However, the order of these biosynthetic steps has still to be determined. In late-stage paraherquamide biosynthesis, the third P450 monooxygenase, phqO, is probably responsible for the C-14 hydroxylation, transforming paraherquamide F to paraherquamide G, and paraherquamide E to the final product paraherquamide A. The expansion from the 6-membered ring pyran (in paraherquamides F and G) to the 7-membered dioxepin ring (in paraherquamides A and E) represents a poorly understood but intriguing process that probably involves the 2-oxoglutarate-dependent dioxygenase phqC. Finally, the remaining members of the paraherquamide cluster, including phqI as well as phqM (or phqH), do not have a clearly prescribed role and appear to be redundant. The protein is Cytochrome P450 monooxygenase phqL of Penicillium fellutanum.